Reading from the N-terminus, the 380-residue chain is Cytochrome b (380 aa).

4 consecutive transmembrane segments (helical) span residues 34–54, 78–99, 114–134, and 179–199; these read FGSLLGVCLLTQILTGLLLAM, WLIRNLHANGASFFFICIYLHI, WNTGVILLLTLMATAFVGYVL, and FFALHFLLPFMIAGLTLIHLT. Heme b is bound by residues histidine 84 and histidine 98. 2 residues coordinate heme b: histidine 183 and histidine 197. Residue histidine 202 coordinates a ubiquinone. The next 4 membrane-spanning stretches (helical) occupy residues 227–247, 289–309, 321–341, and 348–368; these read LKDILGFMLMFLPLTTLALFS, LGGVLALAASVLVLFLAPFLH, LSQLLFWILVANLFILTWVGS, and FIIIGQLASLTYFTILLILFP.

Belongs to the cytochrome b family. In terms of assembly, the cytochrome bc1 complex contains 11 subunits: 3 respiratory subunits (MT-CYB, CYC1 and UQCRFS1), 2 core proteins (UQCRC1 and UQCRC2) and 6 low-molecular weight proteins (UQCRH/QCR6, UQCRB/QCR7, UQCRQ/QCR8, UQCR10/QCR9, UQCR11/QCR10 and a cleavage product of UQCRFS1). This cytochrome bc1 complex then forms a dimer. It depends on heme b as a cofactor.

The protein localises to the mitochondrion inner membrane. In terms of biological role, component of the ubiquinol-cytochrome c reductase complex (complex III or cytochrome b-c1 complex) that is part of the mitochondrial respiratory chain. The b-c1 complex mediates electron transfer from ubiquinol to cytochrome c. Contributes to the generation of a proton gradient across the mitochondrial membrane that is then used for ATP synthesis. The polypeptide is Cytochrome b (MT-CYB) (Calonectris leucomelas (Streaked shearwater)).